A 447-amino-acid polypeptide reads, in one-letter code: MTTFLSLTTAAAVLTLARGSNALVRPGNVGKLPALGWNSWNAFGCDIDAAKIMTAANEVVNLGLKDLGYEYINIDDCWSVKSGRDASTQRMVPDPEKFPDGISGLADQIHDLGLKVGIYSSAGLTTCAGYPASLGYEDIDAQTFAEWGIDYLKYDNCGVPSNWTDAYTYCVPDPGSKSTNGTCPDNKNPAPAGYDWRTSLTAERYRRMRDALVSVDRTILYSLCNWGQADVNDWGNETGNSWRTTGDITPSWPRIAAIANENSFLMNYVDFWGYPDPDMLEVGNGNLTLAENRAHFALWAAMKSPLIIGTALDSISQDHLAILSNKILLKFHQDPVVGRPAHPYKWGYNPDWTFDPAHPAEYWSGASSVLGGTLVLMLNSEDTKQRRTAVWKEIPELKDVLGRQGKRRTGFRVTDVWTGKDLGCVRDHYSVELESHDVAALVVGRAC.

A signal peptide spans 1–22 (MTTFLSLTTAAAVLTLARGSNA). Intrachain disulfides connect Cys45/Cys77 and Cys127/Cys157. Catalysis depends on Asp155, which acts as the Nucleophile. N-linked (GlcNAc...) asparagine glycans are attached at residues Asn162 and Asn180. 225–229 (NWGQA) is a substrate binding site. N-linked (GlcNAc...) asparagine glycosylation is present at Asn236. Asp247 (proton donor) is an active-site residue. N-linked (GlcNAc...) asparagine glycosylation occurs at Asn286.

This sequence belongs to the glycosyl hydrolase 27 family.

It is found in the secreted. The enzyme catalyses Hydrolysis of terminal, non-reducing alpha-D-galactose residues in alpha-D-galactosides, including galactose oligosaccharides, galactomannans and galactolipids.. Its function is as follows. Hydrolyzes a variety of simple alpha-D-galactoside as well as more complex molecules such as oligosaccharides and polysaccharides. The chain is Probable alpha-galactosidase B (aglB) from Neosartorya fischeri (strain ATCC 1020 / DSM 3700 / CBS 544.65 / FGSC A1164 / JCM 1740 / NRRL 181 / WB 181) (Aspergillus fischerianus).